Reading from the N-terminus, the 392-residue chain is 1-deoxy-D-xylulose 5-phosphate reductoisomerase (392 aa).

NADPH is bound by residues threonine 10, glycine 11, serine 12, isoleucine 13, arginine 37, glutamine 38, and asparagine 124. Position 125 (lysine 125) interacts with 1-deoxy-D-xylulose 5-phosphate. Glutamate 126 contacts NADPH. Aspartate 150 provides a ligand contact to Mn(2+). The 1-deoxy-D-xylulose 5-phosphate site is built by serine 151, glutamate 152, serine 179, and histidine 202. Glutamate 152 is a binding site for Mn(2+). Glycine 208 is an NADPH binding site. 1-deoxy-D-xylulose 5-phosphate-binding residues include serine 215, asparagine 220, lysine 221, and glutamate 224. Glutamate 224 provides a ligand contact to Mn(2+).

The protein belongs to the DXR family. Requires Mg(2+) as cofactor. Mn(2+) serves as cofactor.

It carries out the reaction 2-C-methyl-D-erythritol 4-phosphate + NADP(+) = 1-deoxy-D-xylulose 5-phosphate + NADPH + H(+). The protein operates within isoprenoid biosynthesis; isopentenyl diphosphate biosynthesis via DXP pathway; isopentenyl diphosphate from 1-deoxy-D-xylulose 5-phosphate: step 1/6. Functionally, catalyzes the NADPH-dependent rearrangement and reduction of 1-deoxy-D-xylulose-5-phosphate (DXP) to 2-C-methyl-D-erythritol 4-phosphate (MEP). In Cupriavidus metallidurans (strain ATCC 43123 / DSM 2839 / NBRC 102507 / CH34) (Ralstonia metallidurans), this protein is 1-deoxy-D-xylulose 5-phosphate reductoisomerase.